The chain runs to 257 residues: Glutamate racemase (257 aa).

Residues 12–13 (DS) and 44–45 (YG) contribute to the substrate site. Cysteine 75 acts as the Proton donor/acceptor in catalysis. Substrate is bound at residue 76 to 77 (NT). Cysteine 185 serves as the catalytic Proton donor/acceptor. 186-187 (TH) contacts substrate.

It belongs to the aspartate/glutamate racemases family.

The enzyme catalyses L-glutamate = D-glutamate. It functions in the pathway cell wall biogenesis; peptidoglycan biosynthesis. Provides the (R)-glutamate required for cell wall biosynthesis. In Clostridium botulinum (strain Kyoto / Type A2), this protein is Glutamate racemase.